Here is a 401-residue protein sequence, read N- to C-terminus: MAHVSSETQDVSPKDELTASEASTRSPLCEHTFPGDSDLRSMIEEHAFQVLSQGSLLESPSYTVCVSEPDKDDDFLSLNFPRKLWKIVESDQFKSISWDENGTCIVINEELFKKEILETKAPYRIFQTDAIKSFVRQLNLYGFSKIQQNFQRSAFLATFLSEEKESSVLSKLKFYYNPNFKRGYPQLLVRVKRRIGVKNASPISTLFNEDFNKKHFRAGANMENHNSALAAEASEESLFSASKNLNMPLTRESSVRQIIANSSVPIRSGFPPPSPSTSVGPSEQIATDQHAILNQLTTIHMHSHSTYMQARGHIVNFITTTTSQYHIISPLQNGYFGLTVEPSAVPTRYPLVSVNEAPYRNMLPAGNPWLQMPTIADRSAAPHSRLALQPSPLDKYHPNYN.

Residues 1 to 11 show a composition bias toward polar residues; the sequence is MAHVSSETQDV. Residues 1–30 are disordered; sequence MAHVSSETQDVSPKDELTASEASTRSPLCE. The DNA-binding element occupies 76 to 194; the sequence is LSLNFPRKLW…PQLLVRVKRR (119 aa).

The protein belongs to the HSF family. As to expression, testis-specific. Present in Sertoli cells and spermatogenic cells (at protein level).

Its subcellular location is the nucleus. The protein localises to the cytoplasm. In Homo sapiens (Human), this protein is Heat shock transcription factor, Y-linked (HSFY1).